The chain runs to 464 residues: Arginine biosynthesis bifunctional protein ArgJ, chloroplastic (464 aa).

The substrate site is built by Thr-208, Lys-234, Thr-245, Glu-332, Asn-459, and Thr-464. Thr-245 functions as the Nucleophile in the catalytic mechanism.

Belongs to the ArgJ family. As to quaternary structure, heterodimer of an alpha and a beta chain.

The protein resides in the plastid. The protein localises to the chloroplast. The catalysed reaction is N(2)-acetyl-L-ornithine + L-glutamate = N-acetyl-L-glutamate + L-ornithine. The enzyme catalyses L-glutamate + acetyl-CoA = N-acetyl-L-glutamate + CoA + H(+). It functions in the pathway amino-acid biosynthesis; L-arginine biosynthesis; L-ornithine and N-acetyl-L-glutamate from L-glutamate and N(2)-acetyl-L-ornithine (cyclic): step 1/1. The protein operates within amino-acid biosynthesis; L-arginine biosynthesis; N(2)-acetyl-L-ornithine from L-glutamate: step 1/4. In terms of biological role, catalyzes two activities which are involved in the cyclic version of arginine biosynthesis: the synthesis of acetylglutamate from glutamate and acetyl-CoA, and of ornithine by transacetylation between acetylornithine and glutamate. The sequence is that of Arginine biosynthesis bifunctional protein ArgJ, chloroplastic from Sorghum bicolor (Sorghum).